The sequence spans 475 residues: Dihydrolipoyl dehydrogenase (475 aa).

FAD-binding positions include Glu36–Cys45, Lys54, and Gly117. The cysteines at positions 45 and 50 are disulfide-linked. NAD(+) is bound by residues Gly182–Ile186, Glu205, Val238, and Ala270–Arg273. The FAD site is built by Asp313 and Ala321. His445 functions as the Proton acceptor in the catalytic mechanism.

It belongs to the class-I pyridine nucleotide-disulfide oxidoreductase family. Requires FAD as cofactor.

It localises to the cytoplasm. The catalysed reaction is N(6)-[(R)-dihydrolipoyl]-L-lysyl-[protein] + NAD(+) = N(6)-[(R)-lipoyl]-L-lysyl-[protein] + NADH + H(+). Its function is as follows. The branched-chain alpha-keto dehydrogenase complex catalyzes the overall conversion of alpha-keto acids to acyl-CoA and CO(2). It contains multiple copies of 3 enzymatic components: branched-chain alpha-keto acid decarboxylase (E1), lipoamide acyltransferase (E2) and lipoamide dehydrogenase (E3). This chain is Dihydrolipoyl dehydrogenase (lpd), found in Vibrio parahaemolyticus serotype O3:K6 (strain RIMD 2210633).